The primary structure comprises 251 residues: UPF0246 protein DSY0297 (251 aa).

It belongs to the UPF0246 family.

The polypeptide is UPF0246 protein DSY0297 (Desulfitobacterium hafniense (strain Y51)).